The primary structure comprises 157 residues: SsrA-binding protein (157 aa).

The disordered stretch occupies residues 126–157 (GLGKGKQAHDKREAVKERDWQRDRARLMRDRG). A compositionally biased stretch (basic and acidic residues) spans 132 to 157 (QAHDKREAVKERDWQRDRARLMRDRG).

Belongs to the SmpB family.

It localises to the cytoplasm. Functionally, required for rescue of stalled ribosomes mediated by trans-translation. Binds to transfer-messenger RNA (tmRNA), required for stable association of tmRNA with ribosomes. tmRNA and SmpB together mimic tRNA shape, replacing the anticodon stem-loop with SmpB. tmRNA is encoded by the ssrA gene; the 2 termini fold to resemble tRNA(Ala) and it encodes a 'tag peptide', a short internal open reading frame. During trans-translation Ala-aminoacylated tmRNA acts like a tRNA, entering the A-site of stalled ribosomes, displacing the stalled mRNA. The ribosome then switches to translate the ORF on the tmRNA; the nascent peptide is terminated with the 'tag peptide' encoded by the tmRNA and targeted for degradation. The ribosome is freed to recommence translation, which seems to be the essential function of trans-translation. The protein is SsrA-binding protein of Methylobacterium radiotolerans (strain ATCC 27329 / DSM 1819 / JCM 2831 / NBRC 15690 / NCIMB 10815 / 0-1).